The primary structure comprises 366 residues: Protein RecA (366 aa).

Position 81–88 (81–88) interacts with ATP; it reads GPESSGKT.

It belongs to the RecA family.

It localises to the cytoplasm. Its function is as follows. Can catalyze the hydrolysis of ATP in the presence of single-stranded DNA, the ATP-dependent uptake of single-stranded DNA by duplex DNA, and the ATP-dependent hybridization of homologous single-stranded DNAs. It interacts with LexA causing its activation and leading to its autocatalytic cleavage. The polypeptide is Protein RecA (Leptospira interrogans serogroup Icterohaemorrhagiae serovar copenhageni (strain Fiocruz L1-130)).